Reading from the N-terminus, the 961-residue chain is Glycine dehydrogenase (decarboxylating) (961 aa).

K709 carries the post-translational modification N6-(pyridoxal phosphate)lysine.

Belongs to the GcvP family. The glycine cleavage system is composed of four proteins: P, T, L and H. Pyridoxal 5'-phosphate is required as a cofactor.

The enzyme catalyses N(6)-[(R)-lipoyl]-L-lysyl-[glycine-cleavage complex H protein] + glycine + H(+) = N(6)-[(R)-S(8)-aminomethyldihydrolipoyl]-L-lysyl-[glycine-cleavage complex H protein] + CO2. Its function is as follows. The glycine cleavage system catalyzes the degradation of glycine. The P protein binds the alpha-amino group of glycine through its pyridoxal phosphate cofactor; CO(2) is released and the remaining methylamine moiety is then transferred to the lipoamide cofactor of the H protein. This Teredinibacter turnerae (strain ATCC 39867 / T7901) protein is Glycine dehydrogenase (decarboxylating).